The sequence spans 330 residues: Ketol-acid reductoisomerase (NADP(+)) (330 aa).

The KARI N-terminal Rossmann domain maps to 1 to 182 (MKKVYYDQDA…GCTRAGVFET (182 aa)). Residues 25-28 (YGSQ), S51, S53, and 83-86 (DQIQ) each bind NADP(+). H108 is a catalytic residue. Residue G134 coordinates NADP(+). Residues 183-328 (TFKEETETDL…AELRQMMPWL (146 aa)) enclose the KARI C-terminal knotted domain. D191, E195, E227, and E231 together coordinate Mg(2+). S252 contributes to the substrate binding site.

It belongs to the ketol-acid reductoisomerase family. Requires Mg(2+) as cofactor.

The catalysed reaction is (2R)-2,3-dihydroxy-3-methylbutanoate + NADP(+) = (2S)-2-acetolactate + NADPH + H(+). It catalyses the reaction (2R,3R)-2,3-dihydroxy-3-methylpentanoate + NADP(+) = (S)-2-ethyl-2-hydroxy-3-oxobutanoate + NADPH + H(+). Its pathway is amino-acid biosynthesis; L-isoleucine biosynthesis; L-isoleucine from 2-oxobutanoate: step 2/4. It participates in amino-acid biosynthesis; L-valine biosynthesis; L-valine from pyruvate: step 2/4. Involved in the biosynthesis of branched-chain amino acids (BCAA). Catalyzes an alkyl-migration followed by a ketol-acid reduction of (S)-2-acetolactate (S2AL) to yield (R)-2,3-dihydroxy-isovalerate. In the isomerase reaction, S2AL is rearranged via a Mg-dependent methyl migration to produce 3-hydroxy-3-methyl-2-ketobutyrate (HMKB). In the reductase reaction, this 2-ketoacid undergoes a metal-dependent reduction by NADPH to yield (R)-2,3-dihydroxy-isovalerate. This Carboxydothermus hydrogenoformans (strain ATCC BAA-161 / DSM 6008 / Z-2901) protein is Ketol-acid reductoisomerase (NADP(+)).